We begin with the raw amino-acid sequence, 487 residues long: Uronate isomerase (487 aa).

This sequence belongs to the metallo-dependent hydrolases superfamily. Uronate isomerase family.

It catalyses the reaction D-glucuronate = D-fructuronate. The catalysed reaction is aldehydo-D-galacturonate = keto-D-tagaturonate. It participates in carbohydrate metabolism; pentose and glucuronate interconversion. This is Uronate isomerase from Caulobacter vibrioides (strain ATCC 19089 / CIP 103742 / CB 15) (Caulobacter crescentus).